Reading from the N-terminus, the 61-residue chain is Metallothionein-2 (61 aa).

An N-acetylmethionine modification is found at M1. The tract at residues 1 to 29 (MDPNCSCAAGDSCTCAGSCKCKECKCTSC) is beta. The a divalent metal cation site is built by C5, C7, C13, C15, C19, C21, C24, C26, C29, C33, C34, C36, C37, C41, C44, C48, C50, and C57. Positions 30-61 (KKSCCSCCPVGCAKCAQGCICKGASDKCSCCA) are alpha. Residue S58 is modified to Phosphoserine. 2 residues coordinate a divalent metal cation: C59 and C60.

This sequence belongs to the metallothionein superfamily. Type 1 family. In terms of assembly, interacts with EOLA1.

In terms of biological role, metallothioneins have a high content of cysteine residues that bind various heavy metals; these proteins are transcriptionally regulated by both heavy metals and glucocorticoids. The protein is Metallothionein-2 of Homo sapiens (Human).